Consider the following 433-residue polypeptide: Divergent protein kinase domain 2B (433 aa).

The first 29 residues, 1–29 (MEPRLGPKAAALHLGWPFLLLWVSGLSYS), serve as a signal peptide directing secretion. Residue Asn-100 is glycosylated (N-linked (GlcNAc...) asparagine).

Belongs to the DIPK family.

Its subcellular location is the secreted. This is Divergent protein kinase domain 2B (DIPK2B) from Bos taurus (Bovine).